Consider the following 101-residue polypeptide: Small ribosomal subunit protein uS14 (101 aa).

The protein belongs to the universal ribosomal protein uS14 family. In terms of assembly, part of the 30S ribosomal subunit. Contacts proteins S3 and S10.

Functionally, binds 16S rRNA, required for the assembly of 30S particles and may also be responsible for determining the conformation of the 16S rRNA at the A site. The chain is Small ribosomal subunit protein uS14 from Pseudomonas syringae pv. tomato (strain ATCC BAA-871 / DC3000).